Reading from the N-terminus, the 346-residue chain is DNA-directed RNA polymerase subunit alpha (346 aa).

The segment at 1 to 242 is alpha N-terminal domain (alpha-NTD); it reads MLIQDGDKLI…DQLSVFINFD (242 aa). Positions 258–346 are alpha C-terminal domain (alpha-CTD); the sequence is LNPNLFKSID…WLKRKEKNEA (89 aa).

This sequence belongs to the RNA polymerase alpha chain family. As to quaternary structure, homodimer. The RNAP catalytic core consists of 2 alpha, 1 beta, 1 beta' and 1 omega subunit. When a sigma factor is associated with the core the holoenzyme is formed, which can initiate transcription.

It carries out the reaction RNA(n) + a ribonucleoside 5'-triphosphate = RNA(n+1) + diphosphate. Functionally, DNA-dependent RNA polymerase catalyzes the transcription of DNA into RNA using the four ribonucleoside triphosphates as substrates. In Maridesulfovibrio salexigens (strain ATCC 14822 / DSM 2638 / NCIMB 8403 / VKM B-1763) (Desulfovibrio salexigens), this protein is DNA-directed RNA polymerase subunit alpha.